Here is a 397-residue protein sequence, read N- to C-terminus: Phosphoglycerate kinase (397 aa).

Substrate contacts are provided by residues 25-27 (DLN), arginine 41, 64-67 (HLGR), arginine 118, and arginine 151. ATP is bound by residues lysine 202, glutamate 324, and 350–353 (GGDT).

The protein belongs to the phosphoglycerate kinase family. In terms of assembly, monomer.

The protein resides in the cytoplasm. The enzyme catalyses (2R)-3-phosphoglycerate + ATP = (2R)-3-phospho-glyceroyl phosphate + ADP. The protein operates within carbohydrate degradation; glycolysis; pyruvate from D-glyceraldehyde 3-phosphate: step 2/5. The chain is Phosphoglycerate kinase from Paracidovorax citrulli (strain AAC00-1) (Acidovorax citrulli).